A 1067-amino-acid chain; its full sequence is Probable isoleucine--tRNA ligase, cytoplasmic (1067 aa).

Positions 47–57 match the 'HIGH' region motif; that stretch reads PFATGLPHYGH. Residues 604–608 carry the 'KMSKS' region motif; the sequence is KMSKR. K607 is an ATP binding site.

Belongs to the class-I aminoacyl-tRNA synthetase family.

The protein resides in the cytoplasm. The catalysed reaction is tRNA(Ile) + L-isoleucine + ATP = L-isoleucyl-tRNA(Ile) + AMP + diphosphate. The chain is Probable isoleucine--tRNA ligase, cytoplasmic (ileS) from Dictyostelium discoideum (Social amoeba).